The following is a 215-amino-acid chain: Probable nicotinate-nucleotide adenylyltransferase (215 aa).

This sequence belongs to the NadD family.

It catalyses the reaction nicotinate beta-D-ribonucleotide + ATP + H(+) = deamido-NAD(+) + diphosphate. Its pathway is cofactor biosynthesis; NAD(+) biosynthesis; deamido-NAD(+) from nicotinate D-ribonucleotide: step 1/1. In terms of biological role, catalyzes the reversible adenylation of nicotinate mononucleotide (NaMN) to nicotinic acid adenine dinucleotide (NaAD). The protein is Probable nicotinate-nucleotide adenylyltransferase of Shewanella sp. (strain W3-18-1).